Here is a 775-residue protein sequence, read N- to C-terminus: N6-adenosine-methyltransferase non-catalytic subunit MTB (775 aa).

Over residues 1-10 the composition is skewed to basic and acidic residues; the sequence is MKKKQEESSL. Disordered regions lie at residues 1–424 and 520–569; these read MKKK…GAIP and DRGG…EQND. Low complexity predominate over residues 40 to 49; the sequence is FESSSRSGGS. 5 stretches are compositionally biased toward basic and acidic residues: residues 50–79, 100–117, 125–222, 229–278, and 333–344; these read KSKE…ERTH, DGDH…DSGG, EHGE…LKDN, SSGD…RGEA, and EWAHNQEGRQRS. Positions 375-400 are enriched in polar residues; the sequence is QRGSTPGRTNFVQTPNRGYQTPQGTR.

The protein belongs to the MT-A70-like family. In terms of assembly, forms homodimers. Interacts with HAKAI, MTA and VIR. Associates with MTA, FIP37, VIR and HAKAI to form the m6A writer complex which is essential for adenosine methylation at specific mRNA sequences.

The protein localises to the nucleus speckle. The protein resides in the nucleus. Its subcellular location is the nucleoplasm. In terms of biological role, probable non-catalytic subunit of the N6-methyltransferase complex, a multiprotein complex that mediates N6-methyladenosine (m6A) methylation at the 5'-[AG]GAC-3' consensus sites of some mRNAs. Associates with MTA, FIP37, VIR and HAKAI to form the m6A writer complex which is essential for adenosine methylation at specific mRNA sequences. N6-methyladenosine (m6A) plays a role in mRNA stability, processing, translation efficiency and editing. The polypeptide is N6-adenosine-methyltransferase non-catalytic subunit MTB (Arabidopsis thaliana (Mouse-ear cress)).